Reading from the N-terminus, the 857-residue chain is Protein ARG5,6, mitochondrial (857 aa).

Residues 341–492 (INRNSLRDFG…FDSSSIGSSL (152 aa)) enclose the N-acetyltransferase domain. The interval 509–532 (GFHHSTVRRNTNPNPPLSEGKQTE) is disordered. C669 is a catalytic residue.

The protein in the N-terminal section; belongs to the acetylglutamate kinase family. This sequence in the C-terminal section; belongs to the NAGSA dehydrogenase family.

The protein localises to the mitochondrion. It carries out the reaction N-acetyl-L-glutamate 5-semialdehyde + phosphate + NADP(+) = N-acetyl-L-glutamyl 5-phosphate + NADPH + H(+). It catalyses the reaction N-acetyl-L-glutamate + ATP = N-acetyl-L-glutamyl 5-phosphate + ADP. Its pathway is amino-acid biosynthesis; L-arginine biosynthesis; N(2)-acetyl-L-ornithine from L-glutamate: step 2/4. The protein operates within amino-acid biosynthesis; L-arginine biosynthesis; N(2)-acetyl-L-ornithine from L-glutamate: step 3/4. The protein is Protein ARG5,6, mitochondrial (ARG5,6) of Candida albicans (Yeast).